The primary structure comprises 360 residues: Chorismate synthase (360 aa).

An NADP(+)-binding site is contributed by Arg-47. FMN is bound by residues 124-126 (RSS), 240-241 (NA), Gly-285, 300-304 (KPVAT), and Arg-326.

The protein belongs to the chorismate synthase family. In terms of assembly, homotetramer. Requires FMNH2 as cofactor.

The catalysed reaction is 5-O-(1-carboxyvinyl)-3-phosphoshikimate = chorismate + phosphate. It participates in metabolic intermediate biosynthesis; chorismate biosynthesis; chorismate from D-erythrose 4-phosphate and phosphoenolpyruvate: step 7/7. In terms of biological role, catalyzes the anti-1,4-elimination of the C-3 phosphate and the C-6 proR hydrogen from 5-enolpyruvylshikimate-3-phosphate (EPSP) to yield chorismate, which is the branch point compound that serves as the starting substrate for the three terminal pathways of aromatic amino acid biosynthesis. This reaction introduces a second double bond into the aromatic ring system. The sequence is that of Chorismate synthase from Cytophaga hutchinsonii (strain ATCC 33406 / DSM 1761 / CIP 103989 / NBRC 15051 / NCIMB 9469 / D465).